The sequence spans 95 residues: Small ribosomal subunit protein uS19 (95 aa).

Belongs to the universal ribosomal protein uS19 family.

Protein S19 forms a complex with S13 that binds strongly to the 16S ribosomal RNA. The polypeptide is Small ribosomal subunit protein uS19 (Syntrophobacter fumaroxidans (strain DSM 10017 / MPOB)).